The primary structure comprises 344 residues: tRNA N6-adenosine threonylcarbamoyltransferase (344 aa).

Fe cation contacts are provided by H119 and H123. Substrate is bound by residues 141-145 (VVSGG), D174, G187, D191, and N280. Residue D310 participates in Fe cation binding.

This sequence belongs to the KAE1 / TsaD family. Requires Fe(2+) as cofactor.

It is found in the cytoplasm. The catalysed reaction is L-threonylcarbamoyladenylate + adenosine(37) in tRNA = N(6)-L-threonylcarbamoyladenosine(37) in tRNA + AMP + H(+). Its function is as follows. Required for the formation of a threonylcarbamoyl group on adenosine at position 37 (t(6)A37) in tRNAs that read codons beginning with adenine. Is involved in the transfer of the threonylcarbamoyl moiety of threonylcarbamoyl-AMP (TC-AMP) to the N6 group of A37, together with TsaE and TsaB. TsaD likely plays a direct catalytic role in this reaction. The protein is tRNA N6-adenosine threonylcarbamoyltransferase of Listeria welshimeri serovar 6b (strain ATCC 35897 / DSM 20650 / CCUG 15529 / CIP 8149 / NCTC 11857 / SLCC 5334 / V8).